The sequence spans 83 residues: Protein CASPARIAN STRIP INTEGRITY FACTOR 2 (83 aa).

A signal peptide spans 1-28 (MGLLPLVKKLGFIIFLLVSASAFALCSA). Residues 61–83 (SRDYGHSSPKPKLVRPPFKLIPN) form a disordered region. Tyrosine 64 bears the Sulfotyrosine mark. 2 positions are modified to hydroxyproline: proline 69 and proline 71.

As to quaternary structure, interacts with the specific receptor kinases GSO1 and GSO2. In terms of tissue distribution, expressed exclusively in the root stele.

Functionally, peptide hormone required for contiguous Casparian strip diffusion barrier formation in roots via the regulation of CASPs protein expression and distribution in a GSO1-GSO2 signaling pathway. The Casparian strip is required for ion homeostasis (e.g. iron and potassium ions). In Arabidopsis thaliana (Mouse-ear cress), this protein is Protein CASPARIAN STRIP INTEGRITY FACTOR 2.